Consider the following 425-residue polypeptide: Serine--tRNA ligase (425 aa).

L-serine is bound at residue 229 to 231 (TAE). 260–262 (RSE) serves as a coordination point for ATP. Residue E283 participates in L-serine binding. 347–350 (EISS) is a binding site for ATP. S384 is an L-serine binding site.

Belongs to the class-II aminoacyl-tRNA synthetase family. Type-1 seryl-tRNA synthetase subfamily. As to quaternary structure, homodimer. The tRNA molecule binds across the dimer.

The protein resides in the cytoplasm. It carries out the reaction tRNA(Ser) + L-serine + ATP = L-seryl-tRNA(Ser) + AMP + diphosphate + H(+). It catalyses the reaction tRNA(Sec) + L-serine + ATP = L-seryl-tRNA(Sec) + AMP + diphosphate + H(+). Its pathway is aminoacyl-tRNA biosynthesis; selenocysteinyl-tRNA(Sec) biosynthesis; L-seryl-tRNA(Sec) from L-serine and tRNA(Sec): step 1/1. Functionally, catalyzes the attachment of serine to tRNA(Ser). Is also able to aminoacylate tRNA(Sec) with serine, to form the misacylated tRNA L-seryl-tRNA(Sec), which will be further converted into selenocysteinyl-tRNA(Sec). The protein is Serine--tRNA ligase of Rhizorhabdus wittichii (strain DSM 6014 / CCUG 31198 / JCM 15750 / NBRC 105917 / EY 4224 / RW1) (Sphingomonas wittichii).